Here is a 341-residue protein sequence, read N- to C-terminus: S-adenosylmethionine:tRNA ribosyltransferase-isomerase (341 aa).

Belongs to the QueA family. As to quaternary structure, monomer.

The protein localises to the cytoplasm. It catalyses the reaction 7-aminomethyl-7-carbaguanosine(34) in tRNA + S-adenosyl-L-methionine = epoxyqueuosine(34) in tRNA + adenine + L-methionine + 2 H(+). Its pathway is tRNA modification; tRNA-queuosine biosynthesis. Its function is as follows. Transfers and isomerizes the ribose moiety from AdoMet to the 7-aminomethyl group of 7-deazaguanine (preQ1-tRNA) to give epoxyqueuosine (oQ-tRNA). This Clostridium botulinum (strain Eklund 17B / Type B) protein is S-adenosylmethionine:tRNA ribosyltransferase-isomerase.